The sequence spans 351 residues: Prostaglandin reductase 2 (351 aa).

Residue 99–100 coordinates substrate; it reads FY. Residues 165–168, lysine 192, tyrosine 208, asparagine 231, 253–259, 287–289, and asparagine 337 contribute to the NADP(+) site; these read GACG, CGQISQY, and FTV. Substrate is bound at residue 288 to 290; sequence TVL.

Belongs to the NADP-dependent oxidoreductase L4BD family. As to quaternary structure, monomer. In terms of tissue distribution, widely expressed with highest levels in adipose tissues.

The protein resides in the cytoplasm. It carries out the reaction 13,14-dihydro-15-oxo-prostaglandin E2 + NAD(+) = 15-oxoprostaglandin E2 + NADH + H(+). The catalysed reaction is 13,14-dihydro-15-oxo-prostaglandin E2 + NADP(+) = 15-oxoprostaglandin E2 + NADPH + H(+). The enzyme catalyses 13,14-dihydro-15-oxo-PGF2alpha + NADP(+) = 15-oxoprostaglandin F2alpha + NADPH + H(+). It catalyses the reaction 13,14-dihydro-15-oxo-prostaglandin E1 + NADP(+) = 15-oxoprostaglandin E1 + NADPH + H(+). It carries out the reaction 13,14-dihydro-15-oxo-prostaglandin F1alpha + NADP(+) = 15-oxoprostaglandin F1alpha + NADPH + H(+). Its function is as follows. Functions as 15-oxo-prostaglandin 13-reductase and acts on 15-keto-PGE1, 15-keto-PGE2, 15-keto-PGE1-alpha and 15-keto-PGE2-alpha with highest activity towards 15-keto-PGE2. Overexpression represses transcriptional activity of PPARG and inhibits adipocyte differentiation. The polypeptide is Prostaglandin reductase 2 (Mus musculus (Mouse)).